Consider the following 235-residue polypeptide: Uridylate kinase (235 aa).

9–12 provides a ligand contact to ATP; the sequence is KLSG. Position 51 (glycine 51) interacts with UMP. Positions 52 and 56 each coordinate ATP. UMP contacts are provided by residues aspartate 71 and 132–139; that span reads TGNPYFTT. Threonine 159, tyrosine 165, and aspartate 168 together coordinate ATP.

It belongs to the UMP kinase family. As to quaternary structure, homohexamer.

The protein localises to the cytoplasm. It carries out the reaction UMP + ATP = UDP + ADP. Its pathway is pyrimidine metabolism; CTP biosynthesis via de novo pathway; UDP from UMP (UMPK route): step 1/1. Inhibited by UTP. In terms of biological role, catalyzes the reversible phosphorylation of UMP to UDP. This is Uridylate kinase from Christiangramia forsetii (strain DSM 17595 / CGMCC 1.15422 / KT0803) (Gramella forsetii).